A 293-amino-acid chain; its full sequence is 4-hydroxy-tetrahydrodipicolinate synthase (293 aa).

Thr-50 lines the pyruvate pocket. The active-site Proton donor/acceptor is Tyr-138. The Schiff-base intermediate with substrate role is filled by Lys-166. Val-206 serves as a coordination point for pyruvate.

It belongs to the DapA family. As to quaternary structure, homotetramer; dimer of dimers.

The protein localises to the cytoplasm. It catalyses the reaction L-aspartate 4-semialdehyde + pyruvate = (2S,4S)-4-hydroxy-2,3,4,5-tetrahydrodipicolinate + H2O + H(+). It functions in the pathway amino-acid biosynthesis; L-lysine biosynthesis via DAP pathway; (S)-tetrahydrodipicolinate from L-aspartate: step 3/4. In terms of biological role, catalyzes the condensation of (S)-aspartate-beta-semialdehyde [(S)-ASA] and pyruvate to 4-hydroxy-tetrahydrodipicolinate (HTPA). The chain is 4-hydroxy-tetrahydrodipicolinate synthase from Cutibacterium acnes (strain DSM 16379 / KPA171202) (Propionibacterium acnes).